Here is a 183-residue protein sequence, read N- to C-terminus: Glutathione-regulated potassium-efflux system ancillary protein KefG (183 aa).

It belongs to the NAD(P)H dehydrogenase (quinone) family. KefG subfamily. Interacts with KefB.

It localises to the cell inner membrane. It catalyses the reaction a quinone + NADH + H(+) = a quinol + NAD(+). The catalysed reaction is a quinone + NADPH + H(+) = a quinol + NADP(+). In terms of biological role, regulatory subunit of a potassium efflux system that confers protection against electrophiles. Required for full activity of KefB. This Salmonella paratyphi B (strain ATCC BAA-1250 / SPB7) protein is Glutathione-regulated potassium-efflux system ancillary protein KefG.